The sequence spans 132 residues: uncharacterized protein (132 aa).

4 helical membrane-spanning segments follow: residues 15–37 (FPEY…LLLY), 49–71 (AFIP…LRLF), 81–103 (VILT…LALV), and 110–129 (LAAT…MAFV).

It localises to the cell membrane. This is an uncharacterized protein from Archaeoglobus fulgidus (strain ATCC 49558 / DSM 4304 / JCM 9628 / NBRC 100126 / VC-16).